The sequence spans 179 residues: Alkyl hydroperoxide reductase AhpD (179 aa).

Cys-130 (proton donor) is an active-site residue. An intrachain disulfide couples Cys-130 to Cys-133. Residue Cys-133 is the Cysteine sulfenic acid (-SOH) intermediate of the active site.

This sequence belongs to the AhpD family. As to quaternary structure, homotrimer.

The enzyme catalyses N(6)-[(R)-dihydrolipoyl]-L-lysyl-[lipoyl-carrier protein] + a hydroperoxide = N(6)-[(R)-lipoyl]-L-lysyl-[lipoyl-carrier protein] + an alcohol + H2O. Its function is as follows. Antioxidant protein with alkyl hydroperoxidase activity. Required for the reduction of the AhpC active site cysteine residues and for the regeneration of the AhpC enzyme activity. The protein is Alkyl hydroperoxide reductase AhpD of Rhodococcus erythropolis (strain PR4 / NBRC 100887).